The following is a 147-amino-acid chain: NAD(P)H-quinone oxidoreductase subunit N (147 aa).

This sequence belongs to the complex I NdhN subunit family. As to quaternary structure, NDH-1 can be composed of about 15 different subunits; different subcomplexes with different compositions have been identified which probably have different functions.

The protein localises to the cellular thylakoid membrane. It carries out the reaction a plastoquinone + NADH + (n+1) H(+)(in) = a plastoquinol + NAD(+) + n H(+)(out). It catalyses the reaction a plastoquinone + NADPH + (n+1) H(+)(in) = a plastoquinol + NADP(+) + n H(+)(out). NDH-1 shuttles electrons from an unknown electron donor, via FMN and iron-sulfur (Fe-S) centers, to quinones in the respiratory and/or the photosynthetic chain. The immediate electron acceptor for the enzyme in this species is believed to be plastoquinone. Couples the redox reaction to proton translocation, and thus conserves the redox energy in a proton gradient. Cyanobacterial NDH-1 also plays a role in inorganic carbon-concentration. In Synechococcus sp. (strain JA-3-3Ab) (Cyanobacteria bacterium Yellowstone A-Prime), this protein is NAD(P)H-quinone oxidoreductase subunit N.